The following is a 471-amino-acid chain: Ribulose bisphosphate carboxylase large chain 2 (471 aa).

Substrate-binding residues include asparagine 116 and threonine 166. Lysine 168 serves as the catalytic Proton acceptor. Lysine 170 is a binding site for substrate. Mg(2+) contacts are provided by lysine 194, aspartate 196, and glutamate 197. Residue lysine 194 is modified to N6-carboxylysine. Catalysis depends on histidine 287, which acts as the Proton acceptor. Substrate-binding residues include arginine 288, histidine 320, and serine 372.

It belongs to the RuBisCO large chain family. Type I subfamily. Heterohexadecamer of 8 large chains and 8 small chains; disulfide-linked. The disulfide link is formed within the large subunit homodimers. It depends on Mg(2+) as a cofactor. The disulfide bond which can form in the large chain dimeric partners within the hexadecamer appears to be associated with oxidative stress and protein turnover.

It catalyses the reaction 2 (2R)-3-phosphoglycerate + 2 H(+) = D-ribulose 1,5-bisphosphate + CO2 + H2O. The enzyme catalyses D-ribulose 1,5-bisphosphate + O2 = 2-phosphoglycolate + (2R)-3-phosphoglycerate + 2 H(+). In terms of biological role, ruBisCO catalyzes two reactions: the carboxylation of D-ribulose 1,5-bisphosphate, the primary event in carbon dioxide fixation, as well as the oxidative fragmentation of the pentose substrate. Both reactions occur simultaneously and in competition at the same active site. The sequence is that of Ribulose bisphosphate carboxylase large chain 2 from Allochromatium vinosum (strain ATCC 17899 / DSM 180 / NBRC 103801 / NCIMB 10441 / D) (Chromatium vinosum).